We begin with the raw amino-acid sequence, 891 residues long: Alanine--tRNA ligase (891 aa).

4 residues coordinate Zn(2+): His-564, His-568, Cys-677, and His-681.

This sequence belongs to the class-II aminoacyl-tRNA synthetase family. Zn(2+) is required as a cofactor.

It localises to the cytoplasm. It carries out the reaction tRNA(Ala) + L-alanine + ATP = L-alanyl-tRNA(Ala) + AMP + diphosphate. Functionally, catalyzes the attachment of alanine to tRNA(Ala) in a two-step reaction: alanine is first activated by ATP to form Ala-AMP and then transferred to the acceptor end of tRNA(Ala). Also edits incorrectly charged Ser-tRNA(Ala) and Gly-tRNA(Ala) via its editing domain. This Bradyrhizobium sp. (strain ORS 278) protein is Alanine--tRNA ligase.